Consider the following 47-residue polypeptide: Short transmembrane mitochondrial protein 1 (47 aa).

Residues 7 to 23 (GFTLGNVVGMYLAQNYD) traverse the membrane as a helical segment.

It belongs to the STMP1 family. As to quaternary structure, interacts with components of the ubiquinol-cytochrome c oxidoreductase (cytochrome b-c1 complex, complex III, CIII), such as UQCRC1/QCR1, UQCRC2/QCR2 and UQCR10/QCR9. Interacts with components of the cytochrome c oxidase (mitochondrial respiratory chain complex IV) complex, such as MT-CO2. Expressed in monocytes and dendritic cells.

The protein resides in the mitochondrion inner membrane. It is found in the mitochondrion outer membrane. It localises to the mitochondrion intermembrane space. Microprotein involved in mitochondrial respiratory chain complex III (ubiquinol-cytochrome c oxidoreductase) and complex IV (mitochondrial cytochrome c oxidase complex) assembly. Required for the formation of mitochondrial supercomplexes (SCs). Also required for the activation of the NLRP3 inflammasome. This Homo sapiens (Human) protein is Short transmembrane mitochondrial protein 1.